Reading from the N-terminus, the 138-residue chain is Translation initiation factor 2 subunit beta (138 aa).

This sequence belongs to the eIF-2-beta/eIF-5 family. In terms of assembly, heterotrimer composed of an alpha, a beta and a gamma chain.

EIF-2 functions in the early steps of protein synthesis by forming a ternary complex with GTP and initiator tRNA. This chain is Translation initiation factor 2 subunit beta, found in Methanococcus maripaludis (strain C6 / ATCC BAA-1332).